Reading from the N-terminus, the 501-residue chain is Probable leucine aminopeptidase 2 (501 aa).

Residues 1-18 (MVTMKLLYLTSFASLAVA) form the signal peptide. One can recognise a PA domain in the interval 119–216 (SPSVNATAPL…ADGQALIQMI (98 aa)). 2 N-linked (GlcNAc...) asparagine glycosylation sites follow: asparagine 123 and asparagine 233. Residues histidine 257 and aspartate 269 each coordinate Zn(2+). The active-site Proton acceptor is the glutamate 301. Glutamate 302 contributes to the Zn(2+) binding site. Asparagine 316 carries an N-linked (GlcNAc...) asparagine glycan. Position 330 (aspartate 330) interacts with Zn(2+). Asparagine 350 is a glycosylation site (N-linked (GlcNAc...) asparagine). Zn(2+) is bound at residue histidine 428. Asparagine 433 and asparagine 467 each carry an N-linked (GlcNAc...) asparagine glycan. Residues 480-501 (AMKRTPHTHTGGTGCYKDRVEQ) are disordered.

The protein belongs to the peptidase M28 family. M28A subfamily. As to quaternary structure, monomer. Zn(2+) serves as cofactor.

The protein resides in the secreted. In terms of biological role, extracellular aminopeptidase that releases a wide variety of amino acids from natural peptides and contributes to pathogenicity. In Aspergillus fumigatus (strain ATCC MYA-4609 / CBS 101355 / FGSC A1100 / Af293) (Neosartorya fumigata), this protein is Probable leucine aminopeptidase 2 (lap2).